A 385-amino-acid polypeptide reads, in one-letter code: L-arabinitol 4-dehydrogenase (385 aa).

Positions 54, 79, 80, 109, 112, 115, 123, and 164 each coordinate Zn(2+). NAD(+) is bound by residues 191-192 (PI), aspartate 212, arginine 217, isoleucine 292, and 316-318 (QYR).

It belongs to the zinc-containing alcohol dehydrogenase family. As to quaternary structure, homotetramer. Zn(2+) is required as a cofactor.

It carries out the reaction L-arabinitol + NAD(+) = L-xylulose + NADH + H(+). It functions in the pathway carbohydrate degradation; L-arabinose degradation via L-arabinitol; D-xylulose 5-phosphate from L-arabinose (fungal route): step 2/5. Its function is as follows. Catalyzes the NAD-dependent oxidation of L-arabinitol to L-xylulose in the fungal L-arabinose catabolic pathway. L-arabinose catabolism is important for using plant material as a carbon source. NADP cannot act as a cosubstrate. The polypeptide is L-arabinitol 4-dehydrogenase (lad1) (Penicillium rubens (strain ATCC 28089 / DSM 1075 / NRRL 1951 / Wisconsin 54-1255) (Penicillium chrysogenum)).